A 430-amino-acid polypeptide reads, in one-letter code: Adenylosuccinate synthetase (430 aa).

Residues 12 to 18 and 40 to 42 each bind GTP; these read GDEGKGK and GHT. Asp13 (proton acceptor) is an active-site residue. Mg(2+) contacts are provided by Asp13 and Gly40. IMP-binding positions include 13-16, 38-41, Thr128, Arg142, Gln223, Thr238, and Arg302; these read DEGK and NAGH. Residue His41 is the Proton donor of the active site. Position 298–304 (298–304) interacts with substrate; the sequence is TTTGRPR. Residues Arg304, 330-332, and 412-414 each bind GTP; these read SID and SVG.

The protein belongs to the adenylosuccinate synthetase family. Homodimer. It depends on Mg(2+) as a cofactor.

Its subcellular location is the cytoplasm. The enzyme catalyses IMP + L-aspartate + GTP = N(6)-(1,2-dicarboxyethyl)-AMP + GDP + phosphate + 2 H(+). It participates in purine metabolism; AMP biosynthesis via de novo pathway; AMP from IMP: step 1/2. Its function is as follows. Plays an important role in the de novo pathway of purine nucleotide biosynthesis. Catalyzes the first committed step in the biosynthesis of AMP from IMP. This is Adenylosuccinate synthetase from Streptococcus pyogenes serotype M2 (strain MGAS10270).